The following is a 305-amino-acid chain: Putative lipid kinase SAR0780 (305 aa).

A DAGKc domain is found at 3–139 (NKYTHGVLFY…YDVIKINNQY (137 aa)). ATP is bound by residues S44, 74–80 (GDGTVNE), and T101. Mg(2+) contacts are provided by S220, D223, and E225. The Proton acceptor role is filled by E281.

The protein belongs to the diacylglycerol/lipid kinase family. Mg(2+) is required as a cofactor.

May catalyze the ATP-dependent phosphorylation of lipids other than diacylglycerol (DAG). In fact, is not able to exhibit diacylglycerol kinase activity in vitro. This chain is Putative lipid kinase SAR0780, found in Staphylococcus aureus (strain MRSA252).